The primary structure comprises 260 residues: tRNA pseudouridine synthase B (260 aa).

Position 44 (H44) interacts with substrate. D49 acts as the Nucleophile in catalysis. Substrate contacts are provided by Y77, Y180, and L201.

The protein belongs to the pseudouridine synthase TruB family. Type 1 subfamily.

The catalysed reaction is uridine(55) in tRNA = pseudouridine(55) in tRNA. Functionally, responsible for synthesis of pseudouridine from uracil-55 in the psi GC loop of transfer RNAs. The polypeptide is tRNA pseudouridine synthase B (Blochmanniella pennsylvanica (strain BPEN)).